The primary structure comprises 354 residues: Protein PHLOEM PROTEIN 2-LIKE A8 (354 aa).

The 168-residue stretch at 12–179 (TGPQVFINFR…EMILEIQKAL (168 aa)) folds into the TIR domain. E86 is an active-site residue.

The enzyme catalyses NAD(+) + H2O = ADP-D-ribose + nicotinamide + H(+). In Arabidopsis thaliana (Mouse-ear cress), this protein is Protein PHLOEM PROTEIN 2-LIKE A8 (PP2A8).